A 297-amino-acid chain; its full sequence is 3-mercaptopyruvate sulfurtransferase (297 aa).

Ala2 bears the N-acetylalanine mark. The Rhodanese 1 domain maps to 25–144 (SSQPLKLLDA…WLNQNLPISS (120 aa)). Position 35 is a phosphoserine (Ser35). Lys40 carries the post-translational modification N6-acetyllysine; alternate. The residue at position 40 (Lys40) is an N6-succinyllysine; alternate. Residues 145–160 (GKSHSEPAEFSAQLDP) are hinge. An N6-succinyllysine mark is found at Lys146 and Lys164. Positions 174–288 (DARRFQVVDA…WYMRAQPEHI (115 aa)) constitute a Rhodanese 2 domain. Substrate is bound at residue Arg188. Cys248 serves as the catalytic Cysteine persulfide intermediate.

As to quaternary structure, monomer (active form). Homodimer; disulfide-linked (inactive form). Expressed in the brain and retina. In the retina, localized to the inner and outer plexiform layer, the inner and outer nuclear layer and the outer segments of photoreceptors. In the brain, localized to neurons of mitral cell layers, glomerular, and external plexiform layers in the olfactory bulb. Also found in Purkinje cell stomata and proximal dendrites. In the spinal cord, localized to large neurons. In the cerebral cortex, localized to pyramidial neurons in layers II/III and V, and in layers I-VI of neocortical areas. In the hippocampus, found in CA1 and CA3 pyramidal cells.

It is found in the cytoplasm. The protein localises to the mitochondrion. The protein resides in the synapse. Its subcellular location is the synaptosome. It catalyses the reaction 2-oxo-3-sulfanylpropanoate + [thioredoxin]-dithiol = [thioredoxin]-disulfide + hydrogen sulfide + pyruvate + H(+). With respect to regulation, by oxidative stress, and thioredoxin. Under oxidative stress conditions, the catalytic cysteine site is converted to a sulfenate which inhibits the MPST enzyme activity. Reduced thioredoxin cleaves an intersubunit disulfide bond to turn on the redox switch and reactivate the enzyme. Inhibited by different oxidants, hydrogen peroxide and tetrathionate. Functionally, transfer of a sulfur ion to cyanide or to other thiol compounds. Also has weak rhodanese activity. Detoxifies cyanide and is required for thiosulfate biosynthesis. Acts as an antioxidant. In combination with cysteine aminotransferase (CAT), contributes to the catabolism of cysteine and is an important producer of hydrogen sulfide in the brain, retina and vascular endothelial cells. Hydrogen sulfide H(2)S is an important synaptic modulator, signaling molecule, smooth muscle contractor and neuroprotectant. Its production by the 3MST/CAT pathway is regulated by calcium ions. This Mus musculus (Mouse) protein is 3-mercaptopyruvate sulfurtransferase (Mpst).